A 328-amino-acid chain; its full sequence is Gonadotropin-releasing hormone receptor (328 aa).

The Extracellular portion of the chain corresponds to 1–38; sequence MANSDSPEQNENHCSSINSSIPLTPGSLPTLTLSGKIR. The N-linked (GlcNAc...) asparagine glycan is linked to N18. A helical membrane pass occupies residues 39–58; the sequence is VTVTFFLFLLSTIFNTSFLL. The Cytoplasmic segment spans residues 59–77; sequence KLQNWTQRKEKRKKLSRMK. A helical membrane pass occupies residues 78 to 97; sequence LLLKHLTLANLLETLIVMPL. Over 98 to 115 the chain is Extracellular; sequence DGMWNITVQWYAGELLCK. N102 is a glycosylation site (N-linked (GlcNAc...) asparagine). A disulfide bridge connects residues C114 and C196. A helical transmembrane segment spans residues 116 to 137; it reads VLSYLKLFSMYAPAFMMVVISL. The Cytoplasmic segment spans residues 138 to 164; it reads DRSLAITKPLAVKSNSKLGQFMIGLAW. The chain crosses the membrane as a helical span at residues 165-184; sequence LLSSIFAGPQLYIFGMIHLA. Over 185–212 the chain is Extracellular; the sequence is DDSGQTEGFSQCVTHCSFPQWWHQAFYN. The chain crosses the membrane as a helical span at residues 213–232; that stretch reads FFTFSCLFIIPLLIMVICNA. Over 233 to 281 the chain is Cytoplasmic; that stretch reads KIIFTLTRVLHQDPHKLQLNQSKNNIPRARLRTLKMTVAFATSFTVCWT. The chain crosses the membrane as a helical span at residues 282–300; sequence PYYVLGIWYWFDPDMVNRV. The Extracellular portion of the chain corresponds to 301–306; the sequence is SDPVNH. A helical transmembrane segment spans residues 307-326; sequence FFFLFAFLNPCFNPLIYGYF. The Cytoplasmic segment spans residues 327-328; sequence SL.

It belongs to the G-protein coupled receptor 1 family.

The protein localises to the cell membrane. Receptor for gonadotropin releasing hormone (GnRH) that mediates the action of GnRH to stimulate the secretion of the gonadotropic hormones luteinizing hormone (LH) and follicle-stimulating hormone (FSH). This receptor mediates its action by association with G-proteins that activate a phosphatidylinositol-calcium second messenger system. In Bos mutus grunniens (Wild yak), this protein is Gonadotropin-releasing hormone receptor (GNRHR).